We begin with the raw amino-acid sequence, 146 residues long: Ninjurin-1 (146 aa).

The interval 1 to 33 (MASEAMELNGGVNRRDDPGARPQQGRMSRNTPL) is disordered. The Extracellular segment spans residues 1 to 75 (MASEAMELNG…ELGPSFSFYI (75 aa)). Residues 37–66 (HYANKKSAAESMLDIALLMANASQLKTVLE) form a required to induce plasma membrane rupture region. Residues 41 to 52 (KKSAAESMLDIA) are helix alpha1. Residues 55–71 (MANASQLKTVLELGPSF) form a helix alpha2 region. An N-linked (GlcNAc...) asparagine glycan is attached at Asn57. A helical membrane pass occupies residues 76–100 (PLITLISISLTLQIIVGILLIFIVK). Residues 101-110 (WNLNDSSKHY) lie on the Cytoplasmic side of the membrane. Residues 111–135 (ILNLLENIVTALVFIVVVVNVFITA) form a helical membrane-spanning segment. The Extracellular segment spans residues 136–146 (FGVQRPDDKTS).

It belongs to the ninjurin family. In terms of assembly, homooligomer; in response to death stimuli, homooligomerizes into long, highly branched filaments and large, ring-shaped structures in the membrane. As to quaternary structure, homodimer; in absence of death stimuli, forms an inactive homodimer. Homooligomer; in response to death stimuli, homooligomerizes into long, highly branched filaments and large, ring-shaped structures in the membrane.

It is found in the cell membrane. The protein resides in the synaptic cell membrane. Its activity is regulated as follows. In normal conditions, NINJ1 is inactivated. In response to death stimuli, homooligomerizes and disrupts membrane integrity by introducing the hydrophilic faces of alpha1 and alpha2 helices into the hydrophobic membrane. Homooligomerization and ability to mediate plasma membrane rupture is inhibited by glycine; it is unclear whether glycine directly or indirectly inhibits homooligomerization. In response to death stimuli, homooligomerizes and disrupts membrane integrity by introducing the hydrophilic faces of alpha1 and alpha2 helices into the hydrophobic membrane. Homooligomerization and ability to mediate plasma membrane rupture is inhibited by glycine; it is unclear whether glycine directly or indirectly inhibits homooligomerization. In normal conditions, NINJ1 is autoinhibited via formation of a homodimer: in the inactive homodimer, the alpha1 and alpha2 helices (residues 41-71) form a single transmembrane region without a kink, in which hydrophilic faces of alpha1 and alpha2 helices are sequestered. Its function is as follows. Effector of various programmed cell death, such as pyroptosis and necroptosis, which mediates plasma membrane rupture (cytolysis). Oligomerizes in response to death stimuli and forms ring-like structures on the plasma membrane: acts by cutting and shedding membrane disks, like a cookie cutter, leading to membrane damage and loss that cannot be repaired by the cell. Plasma membrane rupture leads to release intracellular molecules named damage-associated molecular patterns (DAMPs) that propagate the inflammatory response. Mechanistically, mediates plasma membrane rupture by introducing hydrophilic faces of 2 alpha helices into the hydrophobic membrane. Induces plasma membrane rupture downstream of Gasdermin (GSDMA, GSDMB, GSDMC, GSDMD, or GSDME) or MLKL during pyroptosis or necroptosis, respectively. Also acts as an effector of PANoptosis and ferroptosis. Induces plasma membrane rupture in response to cell swelling caused by osmotic stress. Acts as a regulator of Toll-like receptor 4 (TLR4) signaling triggered by lipopolysaccharide (LPS) during systemic inflammation; directly binds LPS. Involved in leukocyte migration during inflammation by promoting transendothelial migration of macrophages via homotypic binding. Promotes the migration of monocytes across the brain endothelium to central nervous system inflammatory lesions. Also acts as a homophilic transmembrane adhesion molecule involved in various processes such as axonal growth, cell chemotaxis and angiogenesis. Promotes cell adhesion by mediating homophilic interactions via its extracellular N-terminal adhesion motif (N-NAM). Also involved in striated muscle growth and differentiation. The chain is Ninjurin-1 from Danio rerio (Zebrafish).